The following is a 245-amino-acid chain: Transmembrane and ubiquitin-like domain-containing protein 1 (245 aa).

Positions 2–30 (ALIEGVGDEVTVLFSVLACLLVLALAWVS) are required to release iHOPS from membranes. A helical transmembrane segment spans residues 11-31 (VTVLFSVLACLLVLALAWVST). A compositionally biased stretch (polar residues) spans 34–51 (TESTDPLPQSSGTTTPAQ). The segment at 34–100 (TESTDPLPQS…ASTPPDSPQE (67 aa)) is disordered. Residues serine 73, serine 97, and serine 126 each carry the phosphoserine modification. The 74-residue stretch at 102 to 175 (LLLRLKFLND…LHCHVSTRVG (74 aa)) folds into the Ubiquitin-like domain. The next 2 membrane-spanning stretches (helical) occupy residues 194–214 (IGSL…YCQI) and 219–239 (FFPL…SLLA).

Interacts with EEF1A1, GRIA2, GRIP1. Interacts with CAMLG, TUBG1. Interacts with NPM1 and CDKN2A; TMUB1 can enhance interaction between NPM1 and CDKN2A and is proposed to bridge the proteins; proposed to be mediated by iHOPS. Interacts with ERLIN2 and AMFR; TMUB1 promotes the interaction of ERLIN2 with AMFR. Post-translationally, processed by regulated intramembrane proteolysis (RIP) in the N-terminus to release iHOPS from membranes.

It localises to the membrane. It is found in the postsynaptic cell membrane. Its subcellular location is the recycling endosome. The protein localises to the cytoplasm. The protein resides in the cytoskeleton. It localises to the microtubule organizing center. It is found in the centrosome. Its subcellular location is the nucleus. The protein localises to the nucleolus. Its function is as follows. Involved in sterol-regulated ubiquitination and degradation of HMG-CoA reductase HMGCR. Involved in positive regulation of AMPA-selective glutamate receptor GRIA2 recycling to the cell surface. Acts as a negative regulator of hepatocyte growth during regeneration. In terms of biological role, may contribute to the regulation of translation during cell-cycle progression. May contribute to the regulation of cell proliferation. May be involved in centrosome assembly. Modulates stabilization and nucleolar localization of tumor suppressor CDKN2A and enhances association between CDKN2A and NPM1. This Rattus norvegicus (Rat) protein is Transmembrane and ubiquitin-like domain-containing protein 1 (Tmub1).